The primary structure comprises 93 residues: Phosphoribosyl-ATP pyrophosphatase (93 aa).

The protein belongs to the PRA-PH family.

The protein resides in the cytoplasm. It carries out the reaction 1-(5-phospho-beta-D-ribosyl)-ATP + H2O = 1-(5-phospho-beta-D-ribosyl)-5'-AMP + diphosphate + H(+). It participates in amino-acid biosynthesis; L-histidine biosynthesis; L-histidine from 5-phospho-alpha-D-ribose 1-diphosphate: step 2/9. The polypeptide is Phosphoribosyl-ATP pyrophosphatase (Metallosphaera sedula (strain ATCC 51363 / DSM 5348 / JCM 9185 / NBRC 15509 / TH2)).